The sequence spans 407 residues: S-adenosylmethionine synthase (407 aa).

His-15 is an ATP binding site. Asp-17 lines the Mg(2+) pocket. Residue Glu-43 participates in K(+) binding. The L-methionine site is built by Glu-56 and Gln-99. The tract at residues 99 to 109 (QSPDIARGVDT) is flexible loop. Residues 112–131 (ERRGGGTAPGGPGDELDRQG) are disordered. Residues 179 to 181 (DGK), 252 to 253 (RF), Asp-261, 267 to 268 (RK), Ala-284, and Lys-288 each bind ATP. Asp-261 contributes to the L-methionine binding site. Lys-292 provides a ligand contact to L-methionine.

The protein belongs to the AdoMet synthase family. As to quaternary structure, homotetramer; dimer of dimers. The cofactor is Mg(2+). Requires K(+) as cofactor.

The protein resides in the cytoplasm. The enzyme catalyses L-methionine + ATP + H2O = S-adenosyl-L-methionine + phosphate + diphosphate. It functions in the pathway amino-acid biosynthesis; S-adenosyl-L-methionine biosynthesis; S-adenosyl-L-methionine from L-methionine: step 1/1. Functionally, catalyzes the formation of S-adenosylmethionine (AdoMet) from methionine and ATP. The overall synthetic reaction is composed of two sequential steps, AdoMet formation and the subsequent tripolyphosphate hydrolysis which occurs prior to release of AdoMet from the enzyme. The polypeptide is S-adenosylmethionine synthase (Streptomyces fradiae (Streptomyces roseoflavus)).